The following is an 89-amino-acid chain: Small ribosomal subunit protein uS14A (89 aa).

It belongs to the universal ribosomal protein uS14 family. As to quaternary structure, part of the 30S ribosomal subunit. Contacts proteins S3 and S10.

Its function is as follows. Binds 16S rRNA, required for the assembly of 30S particles and may also be responsible for determining the conformation of the 16S rRNA at the A site. This Limosilactobacillus reuteri (strain DSM 20016) (Lactobacillus reuteri) protein is Small ribosomal subunit protein uS14A.